The primary structure comprises 796 residues: Cadherin-11 (796 aa).

The signal sequence occupies residues 1 to 22; sequence MKENYCLQAALVCLGMLCHSHA. Residues 23–53 constitute a propeptide that is removed on maturation; the sequence is FAPERRGHLRPSFHGHHEKGKEGQVLQRSKR. Cadherin domains follow at residues 54–159, 160–268, 269–383, 384–486, and 487–612; these read GWVW…PPEF, LHET…PPKF, PQSV…PPMF, LAPS…DNAP, and KFAA…YILN. Over 54 to 617 the chain is Extracellular; sequence GWVWNQFFVI…AYILNAGLST (564 aa). 2 N-linked (GlcNAc...) asparagine glycosylation sites follow: Asn-455 and Asn-540. Residues 618–640 form a helical membrane-spanning segment; it reads GALIAILACIVILLVIVVLFVTL. Residues 641-796 lie on the Cytoplasmic side of the membrane; it reads RRQKKEPLIV…GSKDTFDDDS (156 aa). At Ser-788 the chain carries Phosphoserine. The residue at position 791 (Thr-791) is a Phosphothreonine.

Interacts with PCDH8. Expressed mainly in brain but also found in other tissues. Expressed in neuroblasts. In the embryo from 67 to 72 days of gestation, detected at high levels in facial mesenchyme including the central palatal mesenchyme, dental mesenchyme, the eye and optic muscle, and the tongue (at protein level).

The protein resides in the cell membrane. Functionally, cadherins are calcium-dependent cell adhesion proteins. They preferentially interact with themselves in a homophilic manner in connecting cells; cadherins may thus contribute to the sorting of heterogeneous cell types. Required for proper focal adhesion assembly. Involved in the regulation of cell migration. This is Cadherin-11 (CDH11) from Homo sapiens (Human).